A 337-amino-acid chain; its full sequence is Phenylalanine--tRNA ligase alpha subunit (337 aa).

A Mg(2+)-binding site is contributed by glutamate 252.

This sequence belongs to the class-II aminoacyl-tRNA synthetase family. Phe-tRNA synthetase alpha subunit type 1 subfamily. Tetramer of two alpha and two beta subunits. It depends on Mg(2+) as a cofactor.

The protein localises to the cytoplasm. It carries out the reaction tRNA(Phe) + L-phenylalanine + ATP = L-phenylalanyl-tRNA(Phe) + AMP + diphosphate + H(+). The polypeptide is Phenylalanine--tRNA ligase alpha subunit (Cellvibrio japonicus (strain Ueda107) (Pseudomonas fluorescens subsp. cellulosa)).